We begin with the raw amino-acid sequence, 85 residues long: UPF0386 protein RHE_CH01859 (85 aa).

Belongs to the UPF0386 family.

The protein is UPF0386 protein RHE_CH01859 of Rhizobium etli (strain ATCC 51251 / DSM 11541 / JCM 21823 / NBRC 15573 / CFN 42).